The following is a 215-amino-acid chain: Probable transaldolase 1 (215 aa).

Lys83 serves as the catalytic Schiff-base intermediate with substrate.

The protein belongs to the transaldolase family. Type 3B subfamily.

It is found in the cytoplasm. It catalyses the reaction D-sedoheptulose 7-phosphate + D-glyceraldehyde 3-phosphate = D-erythrose 4-phosphate + beta-D-fructose 6-phosphate. The protein operates within carbohydrate degradation; pentose phosphate pathway; D-glyceraldehyde 3-phosphate and beta-D-fructose 6-phosphate from D-ribose 5-phosphate and D-xylulose 5-phosphate (non-oxidative stage): step 2/3. Functionally, transaldolase is important for the balance of metabolites in the pentose-phosphate pathway. In Bacillus anthracis, this protein is Probable transaldolase 1.